A 336-amino-acid chain; its full sequence is N-acetyl-gamma-glutamyl-phosphate reductase (336 aa).

Residue Cys-156 is part of the active site.

This sequence belongs to the NAGSA dehydrogenase family. Type 1 subfamily.

The protein resides in the cytoplasm. The enzyme catalyses N-acetyl-L-glutamate 5-semialdehyde + phosphate + NADP(+) = N-acetyl-L-glutamyl 5-phosphate + NADPH + H(+). It functions in the pathway amino-acid biosynthesis; L-arginine biosynthesis; N(2)-acetyl-L-ornithine from L-glutamate: step 3/4. Functionally, catalyzes the NADPH-dependent reduction of N-acetyl-5-glutamyl phosphate to yield N-acetyl-L-glutamate 5-semialdehyde. The protein is N-acetyl-gamma-glutamyl-phosphate reductase of Moritella abyssi.